A 227-amino-acid polypeptide reads, in one-letter code: PKHD-type hydroxylase ACICU_00484 (227 aa).

In terms of domain architecture, Fe2OG dioxygenase spans 78 to 178 (DIIPPLFNRY…RIASFFWVQS (101 aa)). Residues His-96, Asp-98, and His-159 each contribute to the Fe cation site. 2-oxoglutarate is bound at residue Arg-169.

Fe(2+) is required as a cofactor. L-ascorbate serves as cofactor.

The chain is PKHD-type hydroxylase ACICU_00484 from Acinetobacter baumannii (strain ACICU).